The chain runs to 440 residues: Probable carboxypeptidase AFUB_072730 (440 aa).

Positions 1 to 16 are cleaved as a signal peptide; sequence MKPLTSLLLSAALSAA. N-linked (GlcNAc...) asparagine glycosylation is found at N87 and N149. D165 is a Zn(2+) binding site. Catalysis depends on E197, which acts as the Proton acceptor. E198 is a binding site for Zn(2+). N353 and N372 each carry an N-linked (GlcNAc...) asparagine glycan.

This sequence belongs to the peptidase M20A family. Zn(2+) is required as a cofactor.

The protein localises to the secreted. In Aspergillus fumigatus (strain CBS 144.89 / FGSC A1163 / CEA10) (Neosartorya fumigata), this protein is Probable carboxypeptidase AFUB_072730.